We begin with the raw amino-acid sequence, 90 residues long: Putative membrane protein insertion efficiency factor (90 aa).

This sequence belongs to the UPF0161 family.

The protein resides in the cell inner membrane. In terms of biological role, could be involved in insertion of integral membrane proteins into the membrane. This is Putative membrane protein insertion efficiency factor from Bordetella bronchiseptica (strain ATCC BAA-588 / NCTC 13252 / RB50) (Alcaligenes bronchisepticus).